The sequence spans 696 residues: UvrABC system protein B (696 aa).

Residues Glu45–Pro434 enclose the Helicase ATP-binding domain. Gly58–Thr65 is an ATP binding site. Residues Tyr111 to Val134 carry the Beta-hairpin motif. The 167-residue stretch at Gln450–Ile616 folds into the Helicase C-terminal domain. A UVR domain is found at Gly647 to Gln682.

Belongs to the UvrB family. As to quaternary structure, forms a heterotetramer with UvrA during the search for lesions. Interacts with UvrC in an incision complex.

It is found in the cytoplasm. The UvrABC repair system catalyzes the recognition and processing of DNA lesions. A damage recognition complex composed of 2 UvrA and 2 UvrB subunits scans DNA for abnormalities. Upon binding of the UvrA(2)B(2) complex to a putative damaged site, the DNA wraps around one UvrB monomer. DNA wrap is dependent on ATP binding by UvrB and probably causes local melting of the DNA helix, facilitating insertion of UvrB beta-hairpin between the DNA strands. Then UvrB probes one DNA strand for the presence of a lesion. If a lesion is found the UvrA subunits dissociate and the UvrB-DNA preincision complex is formed. This complex is subsequently bound by UvrC and the second UvrB is released. If no lesion is found, the DNA wraps around the other UvrB subunit that will check the other stand for damage. This Ralstonia nicotianae (strain ATCC BAA-1114 / GMI1000) (Ralstonia solanacearum) protein is UvrABC system protein B.